A 234-amino-acid polypeptide reads, in one-letter code: MEVSRIGSFQEHIDKTTGIVTPHPLLRKPLMSQPRGIYLITPDETDTARLIARTAPLLNGIVWLQYRNKLANTALRTEQAQALLALCRQTGIPLLINDDLELAQTIGADGVHLGMHDSNPSIARAQLGPHAIIGVSCYNQIERAKQAIKAGASYVGFGTFYPSHTKTTPYRATPELLRQTTHLGVPRVAIGGLTPKNIAPIIEAGAELLAVISGIYSAKNPVTALKAYQSQFNI.

4-amino-2-methyl-5-(diphosphooxymethyl)pyrimidine contacts are provided by residues 65 to 69 (QYRNK) and Asn97. Mg(2+) is bound by residues Asp98 and Asp117. Ser136 serves as a coordination point for 4-amino-2-methyl-5-(diphosphooxymethyl)pyrimidine. 163-165 (SHT) is a binding site for 2-[(2R,5Z)-2-carboxy-4-methylthiazol-5(2H)-ylidene]ethyl phosphate. Residue Lys166 coordinates 4-amino-2-methyl-5-(diphosphooxymethyl)pyrimidine. 2-[(2R,5Z)-2-carboxy-4-methylthiazol-5(2H)-ylidene]ethyl phosphate-binding positions include Gly192 and 212–213 (IS).

Belongs to the thiamine-phosphate synthase family. It depends on Mg(2+) as a cofactor.

The enzyme catalyses 2-[(2R,5Z)-2-carboxy-4-methylthiazol-5(2H)-ylidene]ethyl phosphate + 4-amino-2-methyl-5-(diphosphooxymethyl)pyrimidine + 2 H(+) = thiamine phosphate + CO2 + diphosphate. It carries out the reaction 2-(2-carboxy-4-methylthiazol-5-yl)ethyl phosphate + 4-amino-2-methyl-5-(diphosphooxymethyl)pyrimidine + 2 H(+) = thiamine phosphate + CO2 + diphosphate. It catalyses the reaction 4-methyl-5-(2-phosphooxyethyl)-thiazole + 4-amino-2-methyl-5-(diphosphooxymethyl)pyrimidine + H(+) = thiamine phosphate + diphosphate. It functions in the pathway cofactor biosynthesis; thiamine diphosphate biosynthesis; thiamine phosphate from 4-amino-2-methyl-5-diphosphomethylpyrimidine and 4-methyl-5-(2-phosphoethyl)-thiazole: step 1/1. Functionally, condenses 4-methyl-5-(beta-hydroxyethyl)thiazole monophosphate (THZ-P) and 2-methyl-4-amino-5-hydroxymethyl pyrimidine pyrophosphate (HMP-PP) to form thiamine monophosphate (TMP). This is Thiamine-phosphate synthase from Xylella fastidiosa (strain 9a5c).